The sequence spans 347 residues: S-adenosylmethionine:tRNA ribosyltransferase-isomerase (347 aa).

The protein belongs to the QueA family. Monomer.

The protein resides in the cytoplasm. It carries out the reaction 7-aminomethyl-7-carbaguanosine(34) in tRNA + S-adenosyl-L-methionine = epoxyqueuosine(34) in tRNA + adenine + L-methionine + 2 H(+). The protein operates within tRNA modification; tRNA-queuosine biosynthesis. Functionally, transfers and isomerizes the ribose moiety from AdoMet to the 7-aminomethyl group of 7-deazaguanine (preQ1-tRNA) to give epoxyqueuosine (oQ-tRNA). This chain is S-adenosylmethionine:tRNA ribosyltransferase-isomerase, found in Bordetella parapertussis (strain 12822 / ATCC BAA-587 / NCTC 13253).